The primary structure comprises 339 residues: Glucokinase (339 aa).

16–21 (GDIGGT) provides a ligand contact to ATP.

Belongs to the bacterial glucokinase family.

It localises to the cytoplasm. It catalyses the reaction D-glucose + ATP = D-glucose 6-phosphate + ADP + H(+). This is Glucokinase from Sinorhizobium medicae (strain WSM419) (Ensifer medicae).